We begin with the raw amino-acid sequence, 374 residues long: Outer membrane protein F (374 aa).

An N-terminal signal peptide occupies residues 1–21 (MMKRNILAVVIPALLAAGAAN). Residues 22 to 27 (AAEIYN) form a beta stranded membrane-spanning segment. Lys-28 is a topological domain (periplasmic). The beta stranded transmembrane segment at 29 to 44 (DGNKLDLYGKVDGLHY) threads the bilayer. Residues 45-55 (FSKDKGNDGDQ) are Extracellular-facing. A beta stranded transmembrane segment spans residues 56-68 (TYVRFGFKGETQI). Residues 69-70 (TD) are Periplasmic-facing. The chain crosses the membrane as a beta stranded span at residues 71–83 (QLTGYGQWEYNVQ). Residues 84–97 (SNHAESQGTEGTKT) lie on the Extracellular side of the membrane. Residues 98–107 (RLGFAGLKFA) form a beta stranded membrane-spanning segment. The Periplasmic segment spans residues 108–110 (DYG). The chain crosses the membrane as a beta stranded span at residues 111 to 116 (SFDYGR). The Extracellular segment spans residues 117–151 (NYGVLYDVEGWTDMLPEFGGDTYTYSDNFMTGRTN). Residues 152–158 (GVATYRN) traverse the membrane as a beta stranded segment. Residues 159 to 166 (NNFFGLVD) lie on the Periplasmic side of the membrane. The beta stranded transmembrane segment at 167–178 (GLNFALQYQGKN) threads the bilayer. The Extracellular portion of the chain corresponds to 179–190 (QNDGRDVKKQNG). A beta stranded transmembrane segment spans residues 191-201 (DGWGISSTYDI). The Periplasmic segment spans residues 202–203 (GE). A beta stranded transmembrane segment spans residues 204–216 (GVSFGAAYASSNR). Residues 217-230 (TDDQKLRSNERGDK) lie on the Extracellular side of the membrane. A beta stranded membrane pass occupies residues 231–242 (ADAWTVGAKYDA). Asn-243 is a topological domain (periplasmic). A beta stranded membrane pass occupies residues 244–255 (NVYLAAMYAETR). Residues 256 to 280 (NMTPFGGGNFTNTCAATENCGGFAS) lie on the Extracellular side of the membrane. A beta stranded transmembrane segment spans residues 281–293 (KTQNFEVTAQYQF). Topologically, residues 294-295 (DF) are periplasmic. A beta stranded transmembrane segment spans residues 296 to 309 (GLRPEVSYLQSKGK). Topologically, residues 310 to 322 (NLNVPGVGSDQDL) are extracellular. The beta stranded transmembrane segment at 323–334 (VKYVSVGTTYYF) threads the bilayer. Over 335-336 (NK) the chain is Periplasmic. A beta stranded transmembrane segment spans residues 337–346 (NMSTYVDYKI). Residues 347–364 (NLLDDNDFTKATGIATDD) lie on the Extracellular side of the membrane. The chain crosses the membrane as a beta stranded span at residues 365–374 (IVGVGLVYQF).

The protein belongs to the Gram-negative porin family. In terms of assembly, homotrimer.

It localises to the cell outer membrane. In terms of biological role, forms pores that allow passive diffusion of small molecules across the outer membrane. The protein is Outer membrane protein F (ompF) of Serratia marcescens.